The primary structure comprises 612 residues: uncharacterized protein (612 aa).

A run of 6 helical transmembrane segments spans residues 13–33 (IPLTLAVIVFALVMFVLEWLP), 38–58 (AILVAVILMVLGLVTPTEGIA), 67–87 (TIMAMFILSYGITRTGIIQII), 107–127 (GFIVGPSSAFLNNTAIVAIFL), 144–164 (LLIPLSYATILGGMITLLGTS), and 189–209 (LGLLTFSVGLIYIVLAAPILL). RCK C-terminal domains lie at 218–302 (GNVA…ERGI) and 316–403 (NNAG…LLVL). Helical transmembrane passes span 419-439 (AIAIVALVIVIAGLDILPISV), 459-479 (IYGAIRWDVIFLLAGLIPLGT), 501-521 (LSGYALLLLFYLATALLTEIL), 525-545 (ATVVLMLPIAFQVAQSLGLNP), 546-566 (LAFMFVVTFAASNSFMSPIGY), and 586-606 (IGAPLTVILTLATPLLVMLIY).

The protein belongs to the SLC13A/DASS transporter (TC 2.A.47) family. NADC subfamily.

It localises to the cell membrane. This is an uncharacterized protein from Synechocystis sp. (strain ATCC 27184 / PCC 6803 / Kazusa).